A 320-amino-acid polypeptide reads, in one-letter code: Cytochrome c biogenesis protein CcsA (320 aa).

Transmembrane regions (helical) follow at residues 14–34 (VLLL…WCFW), 68–88 (GHFP…ACTL), 101–121 (LVAA…SFAL), 146–166 (VIMV…AVLM), 226–246 (TITV…VWAN), 260–277 (TWAL…HTRL), and 289–309 (VASL…LLGI).

The protein belongs to the CcmF/CycK/Ccl1/NrfE/CcsA family. As to quaternary structure, may interact with ccs1.

It is found in the cellular thylakoid membrane. Required during biogenesis of c-type cytochromes (cytochrome c6 and cytochrome f) at the step of heme attachment. The polypeptide is Cytochrome c biogenesis protein CcsA (Synechococcus sp. (strain WH7803)).